The following is a 665-amino-acid chain: DNA ligase (665 aa).

NAD(+)-binding positions include 34–38 (DEEYD), 83–84 (SL), and Glu114. The N6-AMP-lysine intermediate role is filled by Lys116. Positions 137, 171, 287, and 311 each coordinate NAD(+). Zn(2+) contacts are provided by Cys405, Cys408, Cys424, and Cys429. One can recognise a BRCT domain in the interval 587 to 665 (KKSSKLAGLT…EDEFKKMIID (79 aa)).

This sequence belongs to the NAD-dependent DNA ligase family. LigA subfamily. Requires Mg(2+) as cofactor. Mn(2+) is required as a cofactor.

It catalyses the reaction NAD(+) + (deoxyribonucleotide)n-3'-hydroxyl + 5'-phospho-(deoxyribonucleotide)m = (deoxyribonucleotide)n+m + AMP + beta-nicotinamide D-nucleotide.. DNA ligase that catalyzes the formation of phosphodiester linkages between 5'-phosphoryl and 3'-hydroxyl groups in double-stranded DNA using NAD as a coenzyme and as the energy source for the reaction. It is essential for DNA replication and repair of damaged DNA. The chain is DNA ligase from Thermosipho africanus (strain TCF52B).